A 431-amino-acid polypeptide reads, in one-letter code: 23S rRNA (uracil(1939)-C(5))-methyltransferase RlmD (431 aa).

One can recognise a TRAM domain in the interval 10–68 (RVTTRQIITVKVNDLDSFGQGVARHNGKALFIPGLLPEESAEVIITEDKKQFARARVSR). [4Fe-4S] cluster is bound by residues Cys81, Cys87, Cys90, and Cys161. S-adenosyl-L-methionine-binding residues include Gln264, Phe293, Asn298, Glu314, Asn341, and Asp362. Cys388 serves as the catalytic Nucleophile.

It belongs to the class I-like SAM-binding methyltransferase superfamily. RNA M5U methyltransferase family. RlmD subfamily.

The enzyme catalyses uridine(1939) in 23S rRNA + S-adenosyl-L-methionine = 5-methyluridine(1939) in 23S rRNA + S-adenosyl-L-homocysteine + H(+). Functionally, catalyzes the formation of 5-methyl-uridine at position 1939 (m5U1939) in 23S rRNA. This chain is 23S rRNA (uracil(1939)-C(5))-methyltransferase RlmD, found in Salmonella paratyphi A (strain ATCC 9150 / SARB42).